A 650-amino-acid chain; its full sequence is Probable potassium transport system protein Kup 1 (650 aa).

Helical transmembrane passes span glycine 12–methionine 32, isoleucine 54–leucine 74, tryptophan 97–proline 117, valine 139–isoleucine 159, alanine 170–methionine 190, alanine 216–serine 236, serine 249–leucine 269, leucine 295–glycine 315, isoleucine 344–phenylalanine 364, glycine 375–methionine 395, proline 400–serine 420, and glycine 428–tyrosine 448.

Belongs to the HAK/KUP transporter (TC 2.A.72) family.

Its subcellular location is the cell membrane. The catalysed reaction is K(+)(in) + H(+)(in) = K(+)(out) + H(+)(out). Its function is as follows. Transport of potassium into the cell. Likely operates as a K(+):H(+) symporter. The polypeptide is Probable potassium transport system protein Kup 1 (Lactobacillus acidophilus (strain ATCC 700396 / NCK56 / N2 / NCFM)).